The chain runs to 147 residues: Ribonuclease H (147 aa).

The RNase H type-1 domain maps to 3 to 145 (TEDRVEIYTD…ADQLANKGVE (143 aa)). Residues D12, E50, D72, and D137 each coordinate Mg(2+).

It belongs to the RNase H family. Monomer. It depends on Mg(2+) as a cofactor.

It localises to the cytoplasm. The catalysed reaction is Endonucleolytic cleavage to 5'-phosphomonoester.. Endonuclease that specifically degrades the RNA of RNA-DNA hybrids. This Chromobacterium violaceum (strain ATCC 12472 / DSM 30191 / JCM 1249 / CCUG 213 / NBRC 12614 / NCIMB 9131 / NCTC 9757 / MK) protein is Ribonuclease H.